Consider the following 258-residue polypeptide: Acetylglutamate kinase (258 aa).

Substrate-binding positions include 44–45 (GG), arginine 66, and asparagine 158. ATP-binding positions include 181 to 186 (DVSGIL) and 209 to 211 (IIT).

The protein belongs to the acetylglutamate kinase family. ArgB subfamily. As to quaternary structure, homodimer.

The protein localises to the cytoplasm. The enzyme catalyses N-acetyl-L-glutamate + ATP = N-acetyl-L-glutamyl 5-phosphate + ADP. It participates in amino-acid biosynthesis; L-arginine biosynthesis; N(2)-acetyl-L-ornithine from L-glutamate: step 2/4. Catalyzes the ATP-dependent phosphorylation of N-acetyl-L-glutamate. The polypeptide is Acetylglutamate kinase (Shigella flexneri serotype 5b (strain 8401)).